We begin with the raw amino-acid sequence, 216 residues long: Adenylate kinase (216 aa).

An ATP-binding site is contributed by 10–15; the sequence is GAGKGT. An NMP region spans residues 30–59; sequence STGDIFRKNISNKTPLGMEAKSYMDKGQLV. Residues Thr31, Arg36, 57–59, 85–88, and Gln92 contribute to the AMP site; these read QLV and GFPR. Residues 126-163 form an LID region; it reads GRRVCGECGASYHIKFITPKTEGVCDLCGGKLVQRKDD. Residue Arg127 coordinates ATP. Positions 130 and 133 each coordinate Zn(2+). 136–137 contacts ATP; it reads SY. Cys150 and Cys153 together coordinate Zn(2+). AMP is bound by residues Arg160 and Arg171. An ATP-binding site is contributed by Lys199.

Belongs to the adenylate kinase family. As to quaternary structure, monomer.

It is found in the cytoplasm. It catalyses the reaction AMP + ATP = 2 ADP. Its pathway is purine metabolism; AMP biosynthesis via salvage pathway; AMP from ADP: step 1/1. Catalyzes the reversible transfer of the terminal phosphate group between ATP and AMP. Plays an important role in cellular energy homeostasis and in adenine nucleotide metabolism. The chain is Adenylate kinase from Clostridium tetani (strain Massachusetts / E88).